We begin with the raw amino-acid sequence, 201 residues long: MSGTSESELKNLISSLHLNNGFLGIFDCRFPGFLQKSKIQTAIINTGPREQGGIHWITLALEPISYKLFIFDPLGWKDTQLIKFYNFSLNSLIKRSALNNSDRCITVERNTQSVQCTCAGSCGLFCIFFLYCFHFYKQNVFKSWLFQKLNGSTPSLIPCEPHLLHENQTFLYDFLNAKSVYFRKNYRTFIENTKTGLIKTH.

Catalysis depends on residues H55, D72, and C122.

It belongs to the peptidase C5 family. In terms of assembly, interacts with protease cofactor pVI-C; this interaction is necessary for protease activation.

The protein localises to the virion. It localises to the host nucleus. It catalyses the reaction Cleaves proteins of the adenovirus and its host cell at two consensus sites: -Yaa-Xaa-Gly-Gly-|-Xaa- and -Yaa-Xaa-Gly-Xaa-|-Gly- (in which Yaa is Met, Ile or Leu, and Xaa is any amino acid).. Requires DNA and protease cofactor for maximal activation. Inside nascent virions, becomes partially activated by binding to the viral DNA, allowing it to cleave the cofactor that binds to the protease and fully activates it. Actin, like the viral protease cofactor, seems to act as a cofactor in the cleavage of cytokeratin 18 and of actin itself. Cleaves viral precursor proteins (pTP, pIIIa, pVI, pVII, pVIII, and pX) inside newly assembled particles giving rise to mature virions. Protease complexed to its cofactor slides along the viral DNA to specifically locate and cleave the viral precursors. Mature virions have a weakened organization compared to the unmature virions, thereby facilitating subsequent uncoating. Without maturation, the particle lacks infectivity and is unable to uncoat. Late in adenovirus infection, in the cytoplasm, may participate in the cytoskeleton destruction. Cleaves host cell cytoskeletal keratins K7 and K18. The chain is Protease from Ovis aries (Sheep).